A 372-amino-acid chain; its full sequence is MKKGFSLPLWVTGAAKSAVKKLTGLPFEDYELIKIPNDKNLIKIKVHSAGLIKDESHALGISFADSGLDLDVTQNLEIWTIAFLEKTYEKDNNSLDLINIIPGYGVGIDQKTSEICISKFAKEVLFENLLEILPAGYKLNLEIIFPNGKFLAERTSNQSFGIVQGLSIIGTSAETFSSASPDQLKNAKAQLEKIVSHDFYETIIFVIGENGLHLAKSSNIKFPIIKVGNWIGPLLVDAALKKIKRVILFGYHGKLIKLAGGIFHTHNHLADARIEILVYLAVKEEVPIEMIKKLSLASNVEDALLLLESSSPSLADKLWNKLSDTVEKRSSEYLKRYITTDMKVAAIIFDRQRKIRWSGDNGKDYISSFKGF.

This sequence belongs to the CbiD family.

The enzyme catalyses Co-precorrin-5B + S-adenosyl-L-methionine = Co-precorrin-6A + S-adenosyl-L-homocysteine. It participates in cofactor biosynthesis; adenosylcobalamin biosynthesis; cob(II)yrinate a,c-diamide from sirohydrochlorin (anaerobic route): step 6/10. Catalyzes the methylation of C-1 in cobalt-precorrin-5B to form cobalt-precorrin-6A. This chain is Cobalt-precorrin-5B C(1)-methyltransferase, found in Prochlorococcus marinus (strain MIT 9515).